A 211-amino-acid polypeptide reads, in one-letter code: Large ribosomal subunit protein bL25 (211 aa).

The protein belongs to the bacterial ribosomal protein bL25 family. CTC subfamily. In terms of assembly, part of the 50S ribosomal subunit; part of the 5S rRNA/L5/L18/L25 subcomplex. Contacts the 5S rRNA. Binds to the 5S rRNA independently of L5 and L18.

Functionally, this is one of the proteins that binds to the 5S RNA in the ribosome where it forms part of the central protuberance. This is Large ribosomal subunit protein bL25 from Methylobacterium nodulans (strain LMG 21967 / CNCM I-2342 / ORS 2060).